A 51-amino-acid chain; its full sequence is Large ribosomal subunit protein eL39 (51 aa).

It belongs to the eukaryotic ribosomal protein eL39 family. Interacts with YIH1.

In Kluyveromyces lactis (strain ATCC 8585 / CBS 2359 / DSM 70799 / NBRC 1267 / NRRL Y-1140 / WM37) (Yeast), this protein is Large ribosomal subunit protein eL39 (RPL39).